Here is a 310-residue protein sequence, read N- to C-terminus: Transcription factor LRL2 (310 aa).

Composition is skewed to low complexity over residues 1–20 (MNSS…LQSP) and 104–126 (QTQT…QPQT). Disordered regions lie at residues 1–23 (MNSS…PATF) and 95–143 (FHLP…PHSI). Residues 136 to 149 (QATDPHSIAERLRR) are basic motif; degenerate. Residues 136–185 (QATDPHSIAERLRRERIAERMKSLQELVPNGNKTDKASMLDEIIDYVKFL) form the bHLH domain. Residues 150–185 (ERIAERMKSLQELVPNGNKTDKASMLDEIIDYVKFL) are helix-loop-helix motif. Positions 203–225 (ASSQISEDAGGSHENTSSSGEAK) are disordered.

As to quaternary structure, homodimer. In terms of tissue distribution, expressed constitutively in roots, leaves, stems, and flowers.

It is found in the nucleus. Functionally, transcription factor that regulates the development of root hairs. Transcription factor that regulates the development of sperm cells. The chain is Transcription factor LRL2 from Arabidopsis thaliana (Mouse-ear cress).